The following is a 184-amino-acid chain: Protein GrpE (184 aa).

The disordered stretch occupies residues 1–35 (MTQENQNPPPEQEDVAADPQVNEAAASEPAAVKTP).

Belongs to the GrpE family. As to quaternary structure, homodimer.

It localises to the cytoplasm. Functionally, participates actively in the response to hyperosmotic and heat shock by preventing the aggregation of stress-denatured proteins, in association with DnaK and GrpE. It is the nucleotide exchange factor for DnaK and may function as a thermosensor. Unfolded proteins bind initially to DnaJ; upon interaction with the DnaJ-bound protein, DnaK hydrolyzes its bound ATP, resulting in the formation of a stable complex. GrpE releases ADP from DnaK; ATP binding to DnaK triggers the release of the substrate protein, thus completing the reaction cycle. Several rounds of ATP-dependent interactions between DnaJ, DnaK and GrpE are required for fully efficient folding. In Polynucleobacter asymbioticus (strain DSM 18221 / CIP 109841 / QLW-P1DMWA-1) (Polynucleobacter necessarius subsp. asymbioticus), this protein is Protein GrpE.